The primary structure comprises 549 residues: MYCYQCEQTAQGVACVTVGLCGKTAEVAALQDLLIEAAKGLSQYAYRLRQLGIALPEIDAFVLDALFTTVTNVSFDPARLEEQLREAACLRDQLRARYDAACAARHTSPETLSGPALWQPASTRAGLVGTGEAASIAHRLTAQGADLTGLQDLLLYGVKGMAAYACHARILGQTDESVAAFVHEVLTTLAEVPADAEALLGLVLRCGTVSLTVLDLLDRANTGAYGDPQPTPVLMGHRAGKAILVSGHDLKDLAVLLEQTVGLGVDIYTHGEMLPAHGYPELKKYPHLVGHYGGAWQRQRSEFAAFPGPILMTTNCIQNPTAAYRDRLFTCGLVAHPEATALSGRNFAPLIASALAAPGFAEDGPVRHHLAGFGHKAVLGVAPQIIDAVKAGAIRRFVLIGGCDGHESARSYFDDLAGSLPQDAVVLTLGCGKFRVIDHDMGTIAGLPRLLDMGQCNDAYSAIKVAQALAEAFGVGVNDLPLSLVLSWFEQKAVTVLLALLALGVRNIRLGPNLPAFITPPVLKVLVDRFGIMPVGTVAEDLAAMGLAA.

Residues C3, C6, C15, and C21 each coordinate [4Fe-4S] cluster. Positions 248, 272, 316, 403, 431, 456, 490, and 492 each coordinate hybrid [4Fe-2O-2S] cluster. Position 403 is a cysteine persulfide (C403).

The protein belongs to the HCP family. The cofactor is [4Fe-4S] cluster. Hybrid [4Fe-2O-2S] cluster serves as cofactor.

It localises to the cytoplasm. It catalyses the reaction A + NH4(+) + H2O = hydroxylamine + AH2 + H(+). Functionally, catalyzes the reduction of hydroxylamine to form NH(3) and H(2)O. The sequence is that of Hydroxylamine reductase from Rhodospirillum rubrum (strain ATCC 11170 / ATH 1.1.1 / DSM 467 / LMG 4362 / NCIMB 8255 / S1).